The chain runs to 404 residues: Glycosylated lysosomal membrane protein (404 aa).

Residues 1–26 form the signal peptide; that stretch reads MSGYEKPSRGWGFCALSPVLLSLLMA. At 27–370 the chain is on the lumenal side; that stretch reads APLGLLGEET…VDALSPLVLG (344 aa). Residues asparagine 63, asparagine 132, asparagine 157, asparagine 185, and asparagine 228 are each glycosylated (N-linked (GlcNAc...) asparagine). The chain crosses the membrane as a helical span at residues 371-391; that stretch reads IMAVALGAPALMLLAGGLFLL. Topologically, residues 392–404 are cytoplasmic; sequence LGRKRDSEYQSIN. Positions 400 to 404 match the Lysosomal targeting motif motif; sequence YQSIN.

The protein belongs to the GLMP family. Interacts (via lumenal domain) with lysosomal protein MFSD1; the interaction starts while both proteins are still in the endoplasmic reticulum and is required for stabilization of MFSD1 in lysosomes but has no direct effect on its targeting to lysosomes or transporter activity. Highly N-glycosylated. N-glycosylation is essential for GLMP stability and for MFSD1 lysosomal localization.

It is found in the lysosome membrane. Functionally, required to protect lysosomal transporter MFSD1 from lysosomal proteolysis and for MFSD1 lysosomal localization. The protein is Glycosylated lysosomal membrane protein of Bos taurus (Bovine).